Reading from the N-terminus, the 219-residue chain is Thiopurine S-methyltransferase (219 aa).

Positions 10, 45, 66, and 123 each coordinate S-adenosyl-L-methionine.

It belongs to the class I-like SAM-binding methyltransferase superfamily. TPMT family.

Its subcellular location is the cytoplasm. It catalyses the reaction S-adenosyl-L-methionine + a thiopurine = S-adenosyl-L-homocysteine + a thiopurine S-methylether.. The sequence is that of Thiopurine S-methyltransferase from Bordetella petrii (strain ATCC BAA-461 / DSM 12804 / CCUG 43448).